The primary structure comprises 533 residues: 2-isopropylmalate synthase (533 aa).

The Pyruvate carboxyltransferase domain occupies 8 to 270 (VIIFDTTLRD…YFNPFLGRPA (263 aa)). 4 residues coordinate Mn(2+): Asp17, His209, His211, and Asn245. The tract at residues 409 to 533 (RLELVQVSCG…KEKTPEMLQV (125 aa)) is regulatory domain.

The protein belongs to the alpha-IPM synthase/homocitrate synthase family. LeuA type 1 subfamily. In terms of assembly, homodimer. Requires Mn(2+) as cofactor.

Its subcellular location is the cytoplasm. The enzyme catalyses 3-methyl-2-oxobutanoate + acetyl-CoA + H2O = (2S)-2-isopropylmalate + CoA + H(+). It functions in the pathway amino-acid biosynthesis; L-leucine biosynthesis; L-leucine from 3-methyl-2-oxobutanoate: step 1/4. Its function is as follows. Catalyzes the condensation of the acetyl group of acetyl-CoA with 3-methyl-2-oxobutanoate (2-ketoisovalerate) to form 3-carboxy-3-hydroxy-4-methylpentanoate (2-isopropylmalate). This chain is 2-isopropylmalate synthase, found in Microcystis aeruginosa.